We begin with the raw amino-acid sequence, 128 residues long: Large ribosomal subunit protein bL12 (128 aa).

It belongs to the bacterial ribosomal protein bL12 family. In terms of assembly, homodimer. Part of the ribosomal stalk of the 50S ribosomal subunit. Forms a multimeric L10(L12)X complex, where L10 forms an elongated spine to which 2 to 4 L12 dimers bind in a sequential fashion. Binds GTP-bound translation factors.

Its function is as follows. Forms part of the ribosomal stalk which helps the ribosome interact with GTP-bound translation factors. Is thus essential for accurate translation. This Kosmotoga olearia (strain ATCC BAA-1733 / DSM 21960 / TBF 19.5.1) protein is Large ribosomal subunit protein bL12.